The sequence spans 570 residues: Proline--tRNA ligase (570 aa).

The protein belongs to the class-II aminoacyl-tRNA synthetase family. ProS type 1 subfamily. Homodimer.

It is found in the cytoplasm. It carries out the reaction tRNA(Pro) + L-proline + ATP = L-prolyl-tRNA(Pro) + AMP + diphosphate. Functionally, catalyzes the attachment of proline to tRNA(Pro) in a two-step reaction: proline is first activated by ATP to form Pro-AMP and then transferred to the acceptor end of tRNA(Pro). As ProRS can inadvertently accommodate and process non-cognate amino acids such as alanine and cysteine, to avoid such errors it has two additional distinct editing activities against alanine. One activity is designated as 'pretransfer' editing and involves the tRNA(Pro)-independent hydrolysis of activated Ala-AMP. The other activity is designated 'posttransfer' editing and involves deacylation of mischarged Ala-tRNA(Pro). The misacylated Cys-tRNA(Pro) is not edited by ProRS. The polypeptide is Proline--tRNA ligase (Shewanella sp. (strain MR-7)).